The following is a 65-amino-acid chain: Large ribosomal subunit protein bL35 (65 aa).

Belongs to the bacterial ribosomal protein bL35 family.

This is Large ribosomal subunit protein bL35 from Burkholderia ambifaria (strain MC40-6).